The primary structure comprises 584 residues: Lamin-B1 (584 aa).

A disordered region spans residues 1–22 (MAAAVAPLSPQPRGAAASAALS). The segment at 2 to 33 (AAAVAPLSPQPRGAAASAALSPTRISRLQEKE) is head. Serine 22 bears the Phosphoserine mark. An IF rod domain is found at 31–387 (EKEELRQLND…KLLESEEERL (357 aa)). Positions 34-70 (ELRQLNDRLAVYIDKVRSLETENSALQRRVSEREQVC) are coil 1A. Residues 81 to 218 (FETELADARK…NVYEEEIKET (138 aa)) form a coil 1B region. The coil 2 stretch occupies residues 243–385 (QALKEIREQH…YRKLLESEEE (143 aa)). A tail region spans residues 386-584 (RLRLSPGPSS…RKPERSCVVM (199 aa)). 2 disordered regions span residues 388–431 (RLSP…SVSI) and 548–584 (TVNE…CVVM). Over residues 394–408 (SSRVTVSRASSSRSV) the composition is skewed to low complexity. A Nuclear localization signal motif is present at residues 414 to 419 (KRKRID). The region spanning 429-545 (VSISHSASAT…EEVAQRSTVF (117 aa)) is the LTD domain. Acidic residues predominate over residues 551-565 (EGEEEEEEGEEEILE). Over residues 575–584 (RKPERSCVVM) the composition is skewed to basic and acidic residues. A Cysteine methyl ester modification is found at cysteine 581. Cysteine 581 carries S-farnesyl cysteine lipidation. A propeptide spans 582-584 (VVM) (removed in mature form).

The protein belongs to the intermediate filament family. As to quaternary structure, homodimer. Lamin dimers then assemble into dimeric head-to-tail polymers. Ultimately, two head-to-tail polymers assemble laterally into a protofilament with a uniformly shaped rod of 3.5 nm in diameter. Phosphorylation plays a key role in lamin organization, subcellular localization and nuclear envelope disintegration. Phosphorylation by CDK1 at Ser-22 at the onset of mitosis drives lamin disassembly and nuclear envelope breakdown.

The protein resides in the nucleus lamina. The protein localises to the nucleus envelope. It is found in the nucleus. Its subcellular location is the nucleoplasm. It localises to the nucleus matrix. Lamins are intermediate filament proteins that assemble into a filamentous meshwork, and which constitute the major components of the nuclear lamina, a fibrous layer on the nucleoplasmic side of the inner nuclear membrane. Lamins provide a framework for the nuclear envelope, bridging the nuclear envelope and chromatin. Plays an important role in nuclear assembly, chromatin organization, nuclear membrane and telomere dynamics. The sequence is that of Lamin-B1 (LMNB1) from Gallus gallus (Chicken).